The following is a 151-amino-acid chain: Large ribosomal subunit protein uL13 (151 aa).

Residues 129–151 form a disordered region; sequence SNHPHQAQKPETLTINTIPGGNN.

Belongs to the universal ribosomal protein uL13 family. In terms of assembly, part of the 50S ribosomal subunit.

Its function is as follows. This protein is one of the early assembly proteins of the 50S ribosomal subunit, although it is not seen to bind rRNA by itself. It is important during the early stages of 50S assembly. This chain is Large ribosomal subunit protein uL13, found in Gloeothece citriformis (strain PCC 7424) (Cyanothece sp. (strain PCC 7424)).